The chain runs to 77 residues: Beta-defensin 135 (77 aa).

The N-terminal stretch at 1–24 (MATRSVLLALVVLNLLFYVPPGRS) is a signal peptide. 3 disulfide bridges follow: cysteine 37/cysteine 64, cysteine 44/cysteine 58, and cysteine 48/cysteine 65.

This sequence belongs to the beta-defensin family.

Its subcellular location is the secreted. Its function is as follows. Has antibacterial activity. In Homo sapiens (Human), this protein is Beta-defensin 135 (DEFB135).